The primary structure comprises 158 residues: MAIDGILKQGFITTSADKFINWAKTGSMWPMTFGLACCAVEMMHAGAARYDLDQFGIIFRPSPRQSDLMIVAGTLCNKMGPALRKVYDQMPEPRWVVSMGSCANGGGYYHYSYSVVRGCDRIVPVDVYVPGCPPTAEALVYGLLQMQNKIRLTNTIAR.

The [4Fe-4S] cluster site is built by Cys37, Cys38, Cys102, and Cys132.

Belongs to the complex I 20 kDa subunit family. In terms of assembly, NDH-1 is composed of 14 different subunits. Subunits NuoB, C, D, E, F, and G constitute the peripheral sector of the complex. It depends on [4Fe-4S] cluster as a cofactor.

The protein localises to the cell inner membrane. The catalysed reaction is a quinone + NADH + 5 H(+)(in) = a quinol + NAD(+) + 4 H(+)(out). Functionally, NDH-1 shuttles electrons from NADH, via FMN and iron-sulfur (Fe-S) centers, to quinones in the respiratory chain. Couples the redox reaction to proton translocation (for every two electrons transferred, four hydrogen ions are translocated across the cytoplasmic membrane), and thus conserves the redox energy in a proton gradient. The protein is NADH-quinone oxidoreductase subunit B of Bordetella avium (strain 197N).